The following is a 324-amino-acid chain: Fibronectin type III domain-containing protein 8 (324 aa).

Residues 179–280 form the Fibronectin type-III domain; it reads PDTPFIFEHT…KPYKFATLAT (102 aa).

This chain is Fibronectin type III domain-containing protein 8 (FNDC8), found in Homo sapiens (Human).